A 219-amino-acid chain; its full sequence is tRNA (guanine-N(7)-)-methyltransferase (219 aa).

Glutamate 44, aspartate 69, glutamate 102, and asparagine 125 together coordinate S-adenosyl-L-methionine. Substrate is bound by residues lysine 129 and aspartate 161.

The protein belongs to the class I-like SAM-binding methyltransferase superfamily. TrmB family.

The enzyme catalyses guanosine(46) in tRNA + S-adenosyl-L-methionine = N(7)-methylguanosine(46) in tRNA + S-adenosyl-L-homocysteine. Its pathway is tRNA modification; N(7)-methylguanine-tRNA biosynthesis. Its function is as follows. Catalyzes the formation of N(7)-methylguanine at position 46 (m7G46) in tRNA. The sequence is that of tRNA (guanine-N(7)-)-methyltransferase from Clostridium perfringens (strain 13 / Type A).